The chain runs to 176 residues: Inner membrane-spanning protein YciB (176 aa).

Transmembrane regions (helical) follow at residues 3–23 (FLFDLFPIILFFVAFKVWGIF), 24–44 (TATAVAIVATLAQVAWVAFRH), 49–69 (TMLWVSLGVIVVFGGATLVLH), 72–92 (KFIQWKPTVLYWLFAIGLLAA), 121–141 (VAWALFFAVLGVANLYVVHNF), and 149–169 (FKLFGTTGAMVVFIILQSLWL).

The protein belongs to the YciB family.

It is found in the cell inner membrane. Plays a role in cell envelope biogenesis, maintenance of cell envelope integrity and membrane homeostasis. The chain is Inner membrane-spanning protein YciB from Burkholderia orbicola (strain MC0-3).